The chain runs to 357 residues: tRNA-specific 2-thiouridylase MnmA (357 aa).

Residues 11–18 (AMSGGVDS) and Leu37 contribute to the ATP site. The active-site Nucleophile is Cys102. A disulfide bridge links Cys102 with Cys197. Gly126 provides a ligand contact to ATP. The tract at residues 148 to 150 (KDQ) is interaction with tRNA. The active-site Cysteine persulfide intermediate is Cys197. The interval 301–302 (RY) is interaction with tRNA.

This sequence belongs to the MnmA/TRMU family.

It is found in the cytoplasm. It carries out the reaction S-sulfanyl-L-cysteinyl-[protein] + uridine(34) in tRNA + AH2 + ATP = 2-thiouridine(34) in tRNA + L-cysteinyl-[protein] + A + AMP + diphosphate + H(+). In terms of biological role, catalyzes the 2-thiolation of uridine at the wobble position (U34) of tRNA, leading to the formation of s(2)U34. In Dehalococcoides mccartyi (strain ATCC BAA-2266 / KCTC 15142 / 195) (Dehalococcoides ethenogenes (strain 195)), this protein is tRNA-specific 2-thiouridylase MnmA.